The following is a 130-amino-acid chain: Large ribosomal subunit protein bL12 (130 aa).

The protein belongs to the bacterial ribosomal protein bL12 family. Homodimer. Part of the ribosomal stalk of the 50S ribosomal subunit. Forms a multimeric L10(L12)X complex, where L10 forms an elongated spine to which 2 to 4 L12 dimers bind in a sequential fashion. Binds GTP-bound translation factors.

Forms part of the ribosomal stalk which helps the ribosome interact with GTP-bound translation factors. Is thus essential for accurate translation. The polypeptide is Large ribosomal subunit protein bL12 (Chlamydia muridarum (strain MoPn / Nigg)).